A 75-amino-acid polypeptide reads, in one-letter code: U6-lycotoxin-Ls1e (75 aa).

The N-terminal stretch at 1 to 21 (MKLLLFTALVLVVISLIEVEA) is a signal peptide. Positions 22-25 (ENER) are excised as a propeptide.

It belongs to the neurotoxin 19 (CSTX) family. 06 (U6-Lctx) subfamily. In terms of processing, contains 4 disulfide bonds. As to expression, expressed by the venom gland.

The protein localises to the secreted. The protein is U6-lycotoxin-Ls1e of Lycosa singoriensis (Wolf spider).